The following is a 158-amino-acid chain: Cytosine deaminase (158 aa).

The CMP/dCMP-type deaminase domain maps to 9-129 (KWDQKGMDIA…KYLQTRGHEV (121 aa)). A substrate-binding site is contributed by Asn51. Zn(2+) is bound at residue His62. Glu64 acts as the Proton donor in catalysis. Residues Cys91 and Cys94 each contribute to the Zn(2+) site. Asp155 is a binding site for substrate.

This sequence belongs to the cytidine and deoxycytidylate deaminase family. As to quaternary structure, homodimer. Zn(2+) serves as cofactor.

It localises to the cytoplasm. It is found in the nucleus. It carries out the reaction cytosine + H2O + H(+) = uracil + NH4(+). It participates in pyrimidine metabolism; UMP biosynthesis via salvage pathway; uracil from cytosine: step 1/1. Its function is as follows. Catalyzes the hydrolytic deamination of cytosine to uracil or 5-methylcytosine to thymine. Is involved in the pyrimidine salvage pathway, which allows the cell to utilize cytosine for pyrimidine nucleotide synthesis. The sequence is that of Cytosine deaminase from Saccharomyces cerevisiae (strain ATCC 204508 / S288c) (Baker's yeast).